Reading from the N-terminus, the 348-residue chain is Eukaryotic translation initiation factor 3 subunit F (348 aa).

The 137-residue stretch at 30-166 folds into the MPN domain; it reads VVIQPQAIFS…TRTYISAPVG (137 aa). Gly residues predominate over residues 312–327; that stretch reads STAIGGTGAESGGQRG. Positions 312–348 are disordered; it reads STAIGGTGAESGGQRGGQRNNRQRGGQQRNQAEELRA. Residues 328 to 341 show a composition bias toward low complexity; sequence GQRNNRQRGGQQRN.

This sequence belongs to the eIF-3 subunit F family. In terms of assembly, component of the eukaryotic translation initiation factor 3 (eIF-3) complex.

Its subcellular location is the cytoplasm. Functionally, component of the eukaryotic translation initiation factor 3 (eIF-3) complex, which is involved in protein synthesis of a specialized repertoire of mRNAs and, together with other initiation factors, stimulates binding of mRNA and methionyl-tRNAi to the 40S ribosome. The eIF-3 complex specifically targets and initiates translation of a subset of mRNAs involved in cell proliferation. In Coccidioides immitis (strain RS) (Valley fever fungus), this protein is Eukaryotic translation initiation factor 3 subunit F.